Consider the following 348-residue polypeptide: MIEADRLIAASGRDREEVQDRAIRPLRLDEYIGQPVVREQMALFIQAARGRNESLDHTLIFGPPGLGKTTLANIIAQEMGVSVKSTSGPILERPGDLAAMLTNLEPHDVLFIDEIHRLSPVVEEVLYPAMEDFQLDIMIGEGPAARSIKLDLPPFTLVGATTRAGMLTNPLRDRFGIVQRLEFYSDKDLATIVSRSANILGLVIEDQGAYEIARRARGTPRIANRLLRRVRDYAEVRGKGQITKAVADLALNLLDVDERGFDHSDRRLLLTMIEKFDGGPVGVDNLAAAISEERHTIEDVLEPYLIQQGYIMRTPRGRVVTRHAYLHFGLNVPGRLGEGADFSEAGDE.

The large ATPase domain (RuvB-L) stretch occupies residues 4-184 (ADRLIAASGR…FGIVQRLEFY (181 aa)). Residues isoleucine 23, arginine 24, glycine 65, lysine 68, threonine 69, threonine 70, 131–133 (EDF), arginine 174, tyrosine 184, and arginine 221 contribute to the ATP site. A Mg(2+)-binding site is contributed by threonine 69. Residues 185–255 (SDKDLATIVS…VADLALNLLD (71 aa)) are small ATPAse domain (RuvB-S). The tract at residues 258–348 (ERGFDHSDRR…GADFSEAGDE (91 aa)) is head domain (RuvB-H). Residues arginine 294, arginine 313, and arginine 318 each coordinate DNA.

The protein belongs to the RuvB family. As to quaternary structure, homohexamer. Forms an RuvA(8)-RuvB(12)-Holliday junction (HJ) complex. HJ DNA is sandwiched between 2 RuvA tetramers; dsDNA enters through RuvA and exits via RuvB. An RuvB hexamer assembles on each DNA strand where it exits the tetramer. Each RuvB hexamer is contacted by two RuvA subunits (via domain III) on 2 adjacent RuvB subunits; this complex drives branch migration. In the full resolvosome a probable DNA-RuvA(4)-RuvB(12)-RuvC(2) complex forms which resolves the HJ.

It is found in the cytoplasm. It catalyses the reaction ATP + H2O = ADP + phosphate + H(+). The RuvA-RuvB-RuvC complex processes Holliday junction (HJ) DNA during genetic recombination and DNA repair, while the RuvA-RuvB complex plays an important role in the rescue of blocked DNA replication forks via replication fork reversal (RFR). RuvA specifically binds to HJ cruciform DNA, conferring on it an open structure. The RuvB hexamer acts as an ATP-dependent pump, pulling dsDNA into and through the RuvAB complex. RuvB forms 2 homohexamers on either side of HJ DNA bound by 1 or 2 RuvA tetramers; 4 subunits per hexamer contact DNA at a time. Coordinated motions by a converter formed by DNA-disengaged RuvB subunits stimulates ATP hydrolysis and nucleotide exchange. Immobilization of the converter enables RuvB to convert the ATP-contained energy into a lever motion, pulling 2 nucleotides of DNA out of the RuvA tetramer per ATP hydrolyzed, thus driving DNA branch migration. The RuvB motors rotate together with the DNA substrate, which together with the progressing nucleotide cycle form the mechanistic basis for DNA recombination by continuous HJ branch migration. Branch migration allows RuvC to scan DNA until it finds its consensus sequence, where it cleaves and resolves cruciform DNA. In Pseudomonas putida (strain W619), this protein is Holliday junction branch migration complex subunit RuvB.